Here is a 379-residue protein sequence, read N- to C-terminus: Homoserine O-succinyltransferase (379 aa).

The region spanning 51-360 (NAVLICHALS…DAPQGHDAFL (310 aa)) is the AB hydrolase-1 domain. The active-site Nucleophile is the serine 157. Arginine 227 is a binding site for substrate. Active-site residues include aspartate 323 and histidine 356. Position 357 (aspartate 357) interacts with substrate.

This sequence belongs to the AB hydrolase superfamily. MetX family. As to quaternary structure, homodimer.

It localises to the cytoplasm. It carries out the reaction L-homoserine + succinyl-CoA = O-succinyl-L-homoserine + CoA. It participates in amino-acid biosynthesis; L-methionine biosynthesis via de novo pathway; O-succinyl-L-homoserine from L-homoserine: step 1/1. In terms of biological role, transfers a succinyl group from succinyl-CoA to L-homoserine, forming succinyl-L-homoserine. In Pseudomonas fluorescens (strain Pf0-1), this protein is Homoserine O-succinyltransferase.